The chain runs to 149 residues: MKTYSATPKDIDRRWYVVDAEGMVLGRLASEVAKIIRGKHKPMYTPHMDTGDFVIVINASKVQVTGRKAEQKTYFSHTGYMGHEKHTPFASVLAKHPERVIEKAVYGMLPKTALGRQVLRRKLRVFAGAEHPHIAQSPAALTFSSAEAK.

Belongs to the universal ribosomal protein uL13 family. In terms of assembly, part of the 50S ribosomal subunit.

This protein is one of the early assembly proteins of the 50S ribosomal subunit, although it is not seen to bind rRNA by itself. It is important during the early stages of 50S assembly. This Gemmatimonas aurantiaca (strain DSM 14586 / JCM 11422 / NBRC 100505 / T-27) protein is Large ribosomal subunit protein uL13.